We begin with the raw amino-acid sequence, 615 residues long: DNA mismatch repair protein MutL (615 aa).

A disordered region spans residues 363-397 (FAEPAVREPVAPRYTPAPASGSRPAAPWPNAQPGY). Over residues 378–391 (PAPASGSRPAAPWP) the composition is skewed to low complexity.

This sequence belongs to the DNA mismatch repair MutL/HexB family.

Its function is as follows. This protein is involved in the repair of mismatches in DNA. It is required for dam-dependent methyl-directed DNA mismatch repair. May act as a 'molecular matchmaker', a protein that promotes the formation of a stable complex between two or more DNA-binding proteins in an ATP-dependent manner without itself being part of a final effector complex. This is DNA mismatch repair protein MutL from Escherichia coli O157:H7.